The following is a 525-amino-acid chain: uncharacterized protein (525 aa).

Residues 1–21 form the signal peptide; the sequence is MLECLSALLVLFAGGGGSVLA. Residues 22 to 448 lie on the Extracellular side of the membrane; the sequence is AVQSKTVADP…ISAASQLDKR (427 aa). Positions 242-264 are disordered; that stretch reads KVSSENCSKDTDDKSGSKKERNT. Residues 449-469 traverse the membrane as a helical segment; it reads IFIFTAITVSITTLMMLGFSY. Residues 470–525 are Cytoplasmic-facing; it reads RSRVSFRDHSIDDSDDDNDWSDDEVEFDEEYFYSLPVSIPEKGISLDKMAQQLGVE.

The protein resides in the membrane. This is an uncharacterized protein from Saccharomyces cerevisiae (strain ATCC 204508 / S288c) (Baker's yeast).